The sequence spans 149 residues: MEVIAENRKARFEYFILEEFEAGMILLSSEVKSLRERKANISDAYVTEKKGEIWLNNMHIAEYKAANQKNHKPKRERKLLLHKKEINKLIGQIKTSGITVVPLSIYFNDKGLAKTKIAIVKGKKLYDKRATIKQREWEREKSRLSKNNL.

It belongs to the SmpB family.

The protein resides in the cytoplasm. Required for rescue of stalled ribosomes mediated by trans-translation. Binds to transfer-messenger RNA (tmRNA), required for stable association of tmRNA with ribosomes. tmRNA and SmpB together mimic tRNA shape, replacing the anticodon stem-loop with SmpB. tmRNA is encoded by the ssrA gene; the 2 termini fold to resemble tRNA(Ala) and it encodes a 'tag peptide', a short internal open reading frame. During trans-translation Ala-aminoacylated tmRNA acts like a tRNA, entering the A-site of stalled ribosomes, displacing the stalled mRNA. The ribosome then switches to translate the ORF on the tmRNA; the nascent peptide is terminated with the 'tag peptide' encoded by the tmRNA and targeted for degradation. The ribosome is freed to recommence translation, which seems to be the essential function of trans-translation. This Wolbachia pipientis subsp. Culex pipiens (strain wPip) protein is SsrA-binding protein.